Reading from the N-terminus, the 361-residue chain is 3-dehydroquinate synthase (361 aa).

NAD(+) is bound by residues 72–77 (SGEKEK), 130–131 (TT), K142, and K151. Residues E184, H247, and H264 each contribute to the Zn(2+) site.

The protein belongs to the sugar phosphate cyclases superfamily. Dehydroquinate synthase family. The cofactor is Co(2+). It depends on Zn(2+) as a cofactor. Requires NAD(+) as cofactor.

It localises to the cytoplasm. It carries out the reaction 7-phospho-2-dehydro-3-deoxy-D-arabino-heptonate = 3-dehydroquinate + phosphate. It participates in metabolic intermediate biosynthesis; chorismate biosynthesis; chorismate from D-erythrose 4-phosphate and phosphoenolpyruvate: step 2/7. Functionally, catalyzes the conversion of 3-deoxy-D-arabino-heptulosonate 7-phosphate (DAHP) to dehydroquinate (DHQ). This is 3-dehydroquinate synthase from Bacillus cereus (strain B4264).